Reading from the N-terminus, the 194-residue chain is Large ribosomal subunit protein uL24c (194 aa).

Residues 1–50 constitute a chloroplast transit peptide; the sequence is MVAMAMASLQSSMSSLSLSSNSFLGQPLSPITLSPFLQGKPTEKKCLIVM.

Belongs to the universal ribosomal protein uL24 family. As to quaternary structure, part of the 50S ribosomal subunit.

The protein localises to the plastid. It is found in the chloroplast. In terms of biological role, one of two assembly initiator proteins, it binds directly to the 5'-end of the 23S rRNA, where it nucleates assembly of the 50S subunit. The chain is Large ribosomal subunit protein uL24c (RPL24) from Pisum sativum (Garden pea).